The following is a 502-amino-acid chain: ATP synthase subunit beta, chloroplastic (502 aa).

S17 carries the phosphoserine modification. Position 176 to 183 (176 to 183 (GGAGVGKT)) interacts with ATP.

Belongs to the ATPase alpha/beta chains family. As to quaternary structure, F-type ATPases have 2 components, CF(1) - the catalytic core - and CF(0) - the membrane proton channel. CF(1) has five subunits: alpha(3), beta(3), gamma(1), delta(1), epsilon(1). CF(0) has four main subunits: a(1), b(1), b'(1) and c(9-12).

Its subcellular location is the plastid. The protein resides in the chloroplast thylakoid membrane. The enzyme catalyses ATP + H2O + 4 H(+)(in) = ADP + phosphate + 5 H(+)(out). Produces ATP from ADP in the presence of a proton gradient across the membrane. The catalytic sites are hosted primarily by the beta subunits. The sequence is that of ATP synthase subunit beta, chloroplastic from Lepidium virginicum (Virginia pepperweed).